A 217-amino-acid polypeptide reads, in one-letter code: Ribosome maturation factor RimP (217 aa).

This sequence belongs to the RimP family.

Its subcellular location is the cytoplasm. Functionally, required for maturation of 30S ribosomal subunits. In Nocardia farcinica (strain IFM 10152), this protein is Ribosome maturation factor RimP.